The sequence spans 998 residues: MTLKVILGEHQITRTELPVGIATVSGCGAVVYCISKFWGYGAIAPYPQSGGNRVTRALQRAVIDKTKTPIETRFYPLDSLRTVTPKRAVDNGHAVSGAVRDAARRLIDESITAVGGSKFEVNPNPNSSTGLRNHFHFAVGDLAQDFRNDTPADDAFIVGVDVDYYVTEPDVLLEHMRPVVLHTFNPKKVSGFDADSPFTIKNNLVEYKVSGGAAWVHPVWDWCEAGEFIASRVRTSWKEWFLQLPLRMIGLEKVGYHKIHHCRPWTDCPDRALVYTIPQYVIWRFNWIDTELHVRKLKRIEYQDETKPGWNRLEYVTDRNELLVSIGREGEHAQITIEKEKLDMLSGLSATQSVNVRLIGMGHKDPQYTSMIVQYYTGKKVVSPISPTVYKPTMPRVHWPVTSDADVPEVSARQYTLPIVSDCMMMPMIKRWETMSESIERRVTFVANDKKPSDRIAKIAETFVKLMNGPFKDLDPLSIEETIERLNKPSQQLQLRAVFEMIGVEPRQLIESFNKNEPGMKSSRIISGFPDILFILKVSRYTLAYSDIVLHAEHNEHWYYPGRNPTEIADGVCEFVSECDAEVIETDFSNLDGRVSSWMQRNIAQKAMVQAFRPEYRDEIISFMDTIINCSAKAKRFGFRYEPGVGVKSGSSTTTPHNTQYNGCVEFTALTFEHPDAEPEDLFRLIGPKCGDDGLSRAIIQKSINRAAKCFGLELKVERYNPEIGLCFLSRVFVDPLATTTTIQDPLRTLRKLHLTTRDPTIPLADAACDRVEGHLCTDALTPLISDYCKMVLRLYGPTASTEQVRNQRRSRNKEKPYWLTCDGSWPQHPQDAHLMKQVLIKRTAIDEDQVDALIGRFAAMKDVWEKITHDSEESAAACTFDEDGVAPNSVDESLPMLNDAKQTRANPGTSRPHSNGGGSSHGNELPRRTEQRAQGPRQPARLPKQGKTNGKSDGNITAGETQRGGIPRGKGPRGGKTNTRRTPPKAGAQPQPSNNRK.

Residues 17-34 (LPVGIATVSGCGAVVYCI) form a helical membrane-spanning segment. The interval 35-998 (SKFWGYGAIA…AQPQPSNNRK (964 aa)) is cytoplasmic. Residues 91-282 (NGHAVSGAVR…LVYTIPQYVI (192 aa)) form a capping region. The active-site For RdRp/TNTase activity is the aspartate 692. A disordered region spans residues 901–998 (AKQTRANPGT…AQPQPSNNRK (98 aa)). Polar residues-rich tracts occupy residues 904–913 (TRANPGTSRP) and 947–961 (GKTN…TAGE). Over residues 971–984 (KGPRGGKTNTRRTP) the composition is skewed to basic residues.

Belongs to the nodaviridae RNA polymerase family. As to quaternary structure, homododecamer. Forms 2 stacked rings of 35-nm in diameter, arranged in a crown-like structure at the opening of virus-induced replication vesicles. Interacts with protein B2. The cofactor is Mn(2+).

The protein localises to the host mitochondrion outer membrane. It catalyses the reaction RNA(n) + a ribonucleoside 5'-triphosphate = RNA(n+1) + diphosphate. With respect to regulation, drastically inhibited by phosphonoacetic acid. Only slightly inhibited by gliotoxin. In terms of biological role, RNA-dependent RNA polymerase, which replicates the viral genome composed of 2 RNA segments, RNA1 and RNA2. Does not need an exogenous primer. Also possesses a terminal nucleotidyl transferase (TNTase) activity. The TNTase catalyzes the addition of nucleotide to the 3'-end of plus- and minus-stranded RNAs, probably to repair the 3'-end nucleotide loss. Forms the open necked connection to the cytosol of the virus-induced replication vesicles. Mediates viral RNA1 recruitment. The protein is RNA-directed RNA polymerase of Heteronychus arator (African black beetle).